Here is a 498-residue protein sequence, read N- to C-terminus: MANKESKNVVIIGAGVLSTTFGSMIKELEPDWNIKLYERLDRPGIESSNERNNAGTGHAALCELNYTVQQPDGSIDIEKAKEINEQFEISKQFWGHLVKSGNISNPRDFINPLPHISFVRGKNNVKFLKNRYEAMRNFPMFDNIEYTEDIEEMRKWMPLMMTGRTGNEIMAASKIDEGTDVNYGELTRKMAKSIEKHPNADVQYNHEVINFNRRKDGTWEVKVKNRNSGDVETVLADYVFIGAGGGAIPLLQKTGIPESKHLGGFPISGQFLICTNPDVINEHDVKVYGKEPPGTPPMTVPHLDTRYIEGERTLLFGPFANIGPKFLRNGSNLDLFKSVKPYNITTLLASAVKNLPLIKYSIDQVLMTKEGCMNHLRTFYPEARDEDWQLYTAGKRVQVIKDTKEHGKGFIQFGTEVVNSKDHSVIALLGESPGASTSVSVALEVLEKNFAEYEKDWTPKLQKMIPSYGKSLIDDVKLMRATRKQTSKDLELNYYESK.

It belongs to the MQO family. The cofactor is FAD.

It carries out the reaction (S)-malate + a quinone = a quinol + oxaloacetate. Its pathway is carbohydrate metabolism; tricarboxylic acid cycle; oxaloacetate from (S)-malate (quinone route): step 1/1. In Staphylococcus epidermidis (strain ATCC 12228 / FDA PCI 1200), this protein is Probable malate:quinone oxidoreductase 2.